A 370-amino-acid chain; its full sequence is Putative agmatine deiminase (370 aa).

Cys-361 (amidino-cysteine intermediate) is an active-site residue.

The protein belongs to the agmatine deiminase family.

It carries out the reaction agmatine + H2O = N-carbamoylputrescine + NH4(+). The sequence is that of Putative agmatine deiminase from Shewanella sp. (strain MR-4).